A 343-amino-acid chain; its full sequence is L-threonine 3-dehydrogenase (343 aa).

Position 39 (Cys39) interacts with Zn(2+). Catalysis depends on charge relay system residues Thr41 and His44. The Zn(2+) site is built by His64, Glu65, Cys94, Cys97, Cys100, and Cys108. NAD(+) contacts are provided by residues Ile176, Asp196, Arg201, 263–265 (LGI), and 287–288 (IY).

It belongs to the zinc-containing alcohol dehydrogenase family. Homotetramer. Zn(2+) is required as a cofactor.

The protein resides in the cytoplasm. The catalysed reaction is L-threonine + NAD(+) = (2S)-2-amino-3-oxobutanoate + NADH + H(+). It functions in the pathway amino-acid degradation; L-threonine degradation via oxydo-reductase pathway; glycine from L-threonine: step 1/2. Functionally, catalyzes the NAD(+)-dependent oxidation of L-threonine to 2-amino-3-ketobutyrate. The protein is L-threonine 3-dehydrogenase of Anaeromyxobacter sp. (strain Fw109-5).